The sequence spans 206 residues: Purine nucleoside phosphorylase aq_167 (206 aa).

His42, Cys78, and His93 together coordinate Zn(2+).

This sequence belongs to the purine nucleoside phosphorylase YfiH/LACC1 family. In terms of assembly, homodimer. The cofactor is Cu(2+). Zn(2+) is required as a cofactor.

It carries out the reaction adenosine + phosphate = alpha-D-ribose 1-phosphate + adenine. The catalysed reaction is S-methyl-5'-thioadenosine + phosphate = 5-(methylsulfanyl)-alpha-D-ribose 1-phosphate + adenine. The enzyme catalyses inosine + phosphate = alpha-D-ribose 1-phosphate + hypoxanthine. It catalyses the reaction adenosine + H2O + H(+) = inosine + NH4(+). In terms of biological role, purine nucleoside enzyme that catalyzes the phosphorolysis of adenosine and inosine nucleosides, yielding D-ribose 1-phosphate and the respective free bases, adenine and hypoxanthine. Also catalyzes the phosphorolysis of S-methyl-5'-thioadenosine into adenine and S-methyl-5-thio-alpha-D-ribose 1-phosphate. Also has adenosine deaminase activity. The sequence is that of Purine nucleoside phosphorylase aq_167 from Aquifex aeolicus (strain VF5).